The primary structure comprises 316 residues: Ribosomal RNA small subunit methyltransferase H (316 aa).

Residues 35 to 37 (AGH), D55, F84, D105, and Q112 contribute to the S-adenosyl-L-methionine site.

Belongs to the methyltransferase superfamily. RsmH family.

Its subcellular location is the cytoplasm. The enzyme catalyses cytidine(1402) in 16S rRNA + S-adenosyl-L-methionine = N(4)-methylcytidine(1402) in 16S rRNA + S-adenosyl-L-homocysteine + H(+). Functionally, specifically methylates the N4 position of cytidine in position 1402 (C1402) of 16S rRNA. The polypeptide is Ribosomal RNA small subunit methyltransferase H (Streptococcus pneumoniae (strain P1031)).